The sequence spans 74 residues: Large ribosomal subunit protein bL31 (74 aa).

Residues C16, C18, C38, and C41 each contribute to the Zn(2+) site.

This sequence belongs to the bacterial ribosomal protein bL31 family. Type A subfamily. As to quaternary structure, part of the 50S ribosomal subunit. Zn(2+) serves as cofactor.

Its function is as follows. Binds the 23S rRNA. This chain is Large ribosomal subunit protein bL31, found in Streptomyces griseus subsp. griseus (strain JCM 4626 / CBS 651.72 / NBRC 13350 / KCC S-0626 / ISP 5235).